Consider the following 139-residue polypeptide: Holo-[acyl-carrier-protein] synthase (139 aa).

Residues Asp-8 and Glu-57 each contribute to the Mg(2+) site.

Belongs to the P-Pant transferase superfamily. AcpS family. Requires Mg(2+) as cofactor.

It localises to the cytoplasm. The enzyme catalyses apo-[ACP] + CoA = holo-[ACP] + adenosine 3',5'-bisphosphate + H(+). Transfers the 4'-phosphopantetheine moiety from coenzyme A to a Ser of acyl-carrier-protein. In Sinorhizobium medicae (strain WSM419) (Ensifer medicae), this protein is Holo-[acyl-carrier-protein] synthase.